The chain runs to 815 residues: Probable bifunctional folylpolyglutamate synthase/dihydropteroate synthase (815 aa).

Residues 1 to 416 form a folylpolyglutamate synthase region; the sequence is MRYDEAANFL…LVAGSLFAVA (416 aa). 47-53 is a binding site for ATP; sequence GSNGKGS. A Pterin-binding domain is found at 553–803; it reads TAVMGILNVT…DVPENVAAVR (251 aa). A DHPS region spans residues 555–815; sequence VMGILNVTPD…EATRTGADAE (261 aa). N560 is a Mg(2+) binding site. (7,8-dihydropterin-6-yl)methyl diphosphate contacts are provided by residues T600, D633, N652, D722, K758, and 791 to 793; that span reads RVH.

In the N-terminal section; belongs to the folylpolyglutamate synthase family. This sequence in the C-terminal section; belongs to the DHPS family. Requires Mg(2+) as cofactor.

The catalysed reaction is (6S)-5,6,7,8-tetrahydrofolyl-(gamma-L-Glu)(n) + L-glutamate + ATP = (6S)-5,6,7,8-tetrahydrofolyl-(gamma-L-Glu)(n+1) + ADP + phosphate + H(+). The enzyme catalyses (7,8-dihydropterin-6-yl)methyl diphosphate + 4-aminobenzoate = 7,8-dihydropteroate + diphosphate. It participates in cofactor biosynthesis; tetrahydrofolylpolyglutamate biosynthesis. It functions in the pathway cofactor biosynthesis; tetrahydrofolate biosynthesis; 7,8-dihydrofolate from 2-amino-4-hydroxy-6-hydroxymethyl-7,8-dihydropteridine diphosphate and 4-aminobenzoate: step 1/2. In terms of biological role, can complement an H.volcanii mutant strain that is thymidine auxotroph because it lacks the two dihydrofolate reductase genes encoded by hdrA and hdrB. This Halobacterium salinarum (strain ATCC 700922 / JCM 11081 / NRC-1) (Halobacterium halobium) protein is Probable bifunctional folylpolyglutamate synthase/dihydropteroate synthase (folP).